The following is a 348-amino-acid chain: Holliday junction branch migration complex subunit RuvB (348 aa).

The interval 1-183 is large ATPase domain (RuvB-L); sequence MTDPSRLVTP…FGIPVRLNFY (183 aa). ATP-binding positions include leucine 22, arginine 23, glycine 64, lysine 67, threonine 68, threonine 69, 130-132, arginine 173, tyrosine 183, and arginine 220; that span reads EDF. Threonine 68 lines the Mg(2+) pocket. Positions 184 to 254 are small ATPAse domain (RuvB-S); that stretch reads TIEELESIVS…IADHALGALE (71 aa). Residues 257 to 348 form a head domain (RuvB-H) region; that stretch reads AAGLDAMDRR…FGLFGGEEEA (92 aa). DNA-binding residues include arginine 293, arginine 312, and arginine 317.

Belongs to the RuvB family. As to quaternary structure, homohexamer. Forms an RuvA(8)-RuvB(12)-Holliday junction (HJ) complex. HJ DNA is sandwiched between 2 RuvA tetramers; dsDNA enters through RuvA and exits via RuvB. An RuvB hexamer assembles on each DNA strand where it exits the tetramer. Each RuvB hexamer is contacted by two RuvA subunits (via domain III) on 2 adjacent RuvB subunits; this complex drives branch migration. In the full resolvosome a probable DNA-RuvA(4)-RuvB(12)-RuvC(2) complex forms which resolves the HJ.

The protein resides in the cytoplasm. The enzyme catalyses ATP + H2O = ADP + phosphate + H(+). The RuvA-RuvB-RuvC complex processes Holliday junction (HJ) DNA during genetic recombination and DNA repair, while the RuvA-RuvB complex plays an important role in the rescue of blocked DNA replication forks via replication fork reversal (RFR). RuvA specifically binds to HJ cruciform DNA, conferring on it an open structure. The RuvB hexamer acts as an ATP-dependent pump, pulling dsDNA into and through the RuvAB complex. RuvB forms 2 homohexamers on either side of HJ DNA bound by 1 or 2 RuvA tetramers; 4 subunits per hexamer contact DNA at a time. Coordinated motions by a converter formed by DNA-disengaged RuvB subunits stimulates ATP hydrolysis and nucleotide exchange. Immobilization of the converter enables RuvB to convert the ATP-contained energy into a lever motion, pulling 2 nucleotides of DNA out of the RuvA tetramer per ATP hydrolyzed, thus driving DNA branch migration. The RuvB motors rotate together with the DNA substrate, which together with the progressing nucleotide cycle form the mechanistic basis for DNA recombination by continuous HJ branch migration. Branch migration allows RuvC to scan DNA until it finds its consensus sequence, where it cleaves and resolves cruciform DNA. The sequence is that of Holliday junction branch migration complex subunit RuvB from Rhodopseudomonas palustris (strain HaA2).